A 229-amino-acid polypeptide reads, in one-letter code: Large ribosomal subunit protein uL1 (229 aa).

The protein belongs to the universal ribosomal protein uL1 family. Part of the 50S ribosomal subunit.

Its function is as follows. Binds directly to 23S rRNA. The L1 stalk is quite mobile in the ribosome, and is involved in E site tRNA release. Protein L1 is also a translational repressor protein, it controls the translation of the L11 operon by binding to its mRNA. The chain is Large ribosomal subunit protein uL1 from Chlorobium luteolum (strain DSM 273 / BCRC 81028 / 2530) (Pelodictyon luteolum).